The primary structure comprises 451 residues: Protein-tyrosine kinase 6 (451 aa).

Positions 8 to 72 (HLGPKYVGLW…PHNYLAERET (65 aa)) constitute an SH3 domain. Tyr-13, Tyr-61, Tyr-66, and Tyr-114 each carry phosphotyrosine; by autocatalysis. Residues 78–170 (WFFGCISRSE…SHGLRLAAPC (93 aa)) form the SH2 domain. The tract at residues 171–190 (RKHEPEPLPHWDDWERPREE) is linker. In terms of domain architecture, Protein kinase spans 191–445 (FTLCRKLGSG…ALRERLSSFT (255 aa)). Residues 197–205 (LGSGYFGEV) and Lys-219 each bind ATP. Residue Asp-312 is the Proton acceptor of the active site. Residues Tyr-342 and Tyr-351 each carry the phosphotyrosine; by autocatalysis modification. Position 447 is a phosphotyrosine (Tyr-447).

This sequence belongs to the protein kinase superfamily. Tyr protein kinase family. BRK/PTK6/SIK subfamily. In terms of assembly, interacts with GAP-A.p65. Interacts (via SH3 and SH2 domains) with KHDRBS1. Interacts (via SH3 and SH2 domains) with phosphorylated IRS4. Interacts with ADAM15. Interacts (via SH3 domain) with SFPQ. Interacts with EGFR and ERBB2. Interacts with STAP2. Interacts with PNX. Interacts with SFPQ. Interacts with PTK/ATK. Interacts with CTNNB1. In terms of processing, autophosphorylated. Autophosphorylation of Tyr-342 leads to an increase of kinase activity. Tyr-447 binds to the SH2 domain when phosphorylated and negatively regulates kinase activity. In terms of tissue distribution, epithelia-specific. Very high level in colon and high levels in small intestine and prostate, and low levels in some fetal tissues. Not expressed in breast or ovarian tissue but expressed in high percentage of breast and ovarian cancers. Also overexpressed in some metastatic melanomas, lymphomas, colon cancers, squamous cell carcinomas and prostate cancers. Also found in melanocytes. Not expressed in heart, brain, placenta, lung, liver, skeletal muscle, kidney and pancreas. Isoform 2 is present in prostate epithelial cell lines derived from normal prostate and prostate adenocarcinomas, as well as in a variety of cell lines.

The protein resides in the cytoplasm. It localises to the nucleus. It is found in the cell projection. Its subcellular location is the ruffle. The protein localises to the membrane. It catalyses the reaction L-tyrosyl-[protein] + ATP = O-phospho-L-tyrosyl-[protein] + ADP + H(+). Its activity is regulated as follows. Activated by EGF, NRG1 and IGF1. Inhibited by SOCS3 to phosphorylate STAT3. Stabilized in the inactive form by an association between the SH3 domain and the SH2-TK linker region. Interaction between Trp-184 within SH2-TK linker region and the catalytic domain appears essential for positive regulation of kinase activity. Functionally, non-receptor tyrosine-protein kinase implicated in the regulation of a variety of signaling pathways that control the differentiation and maintenance of normal epithelia, as well as tumor growth. Function seems to be context dependent and differ depending on cell type, as well as its intracellular localization. A number of potential nuclear and cytoplasmic substrates have been identified. These include the RNA-binding proteins: KHDRBS1/SAM68, KHDRBS2/SLM1, KHDRBS3/SLM2 and SFPQ/PSF; transcription factors: STAT3 and STAT5A/B and a variety of signaling molecules: ARHGAP35/p190RhoGAP, PXN/paxillin, BTK/ATK, STAP2/BKS. Phosphorylates the GTPase-activating protein ARAP1 following EGF stimulation which enhances EGFR signaling by delaying EGFR down-regulation. Also associates with a variety of proteins that are likely upstream of PTK6 in various signaling pathways, or for which PTK6 may play an adapter-like role. These proteins include ADAM15, EGFR, ERBB2, ERBB3 and IRS4. In normal or non-tumorigenic tissues, PTK6 promotes cellular differentiation and apoptosis. In tumors PTK6 contributes to cancer progression by sensitizing cells to mitogenic signals and enhancing proliferation, anchorage-independent survival and migration/invasion. Association with EGFR, ERBB2, ERBB3 may contribute to mammary tumor development and growth through enhancement of EGF-induced signaling via BTK/AKT and PI3 kinase. Contributes to migration and proliferation by contributing to EGF-mediated phosphorylation of ARHGAP35/p190RhoGAP, which promotes association with RASA1/p120RasGAP, inactivating RhoA while activating RAS. EGF stimulation resulted in phosphorylation of PNX/Paxillin by PTK6 and activation of RAC1 via CRK/CrKII, thereby promoting migration and invasion. PTK6 activates STAT3 and STAT5B to promote proliferation. Nuclear PTK6 may be important for regulating growth in normal epithelia, while cytoplasmic PTK6 might activate oncogenic signaling pathways. Its function is as follows. Inhibits PTK6 phosphorylation and PTK6 association with other tyrosine-phosphorylated proteins. This chain is Protein-tyrosine kinase 6 (PTK6), found in Homo sapiens (Human).